The primary structure comprises 90 residues: MPFPLVKQDPTSKAFTEASERSTGTQILDVVKAPIGLFGDDAKHEFVTRQEQAVSVVSWAVAAGLIGELIGYRGARSGRKAILANIPFLA.

A helical membrane pass occupies residues 53 to 70 (AVSVVSWAVAAGLIGELI).

The protein localises to the virion membrane. Its function is as follows. Essential for membrane formation. The chain is Major envelope protein (P9) from Pseudomonas savastanoi pv. phaseolicola (Pseudomonas syringae pv. phaseolicola).